Consider the following 213-residue polypeptide: Kynurenine formamidase (213 aa).

Residue Trp20 participates in substrate binding. Positions 50, 54, and 56 each coordinate Zn(2+). His60 functions as the Proton donor/acceptor in the catalytic mechanism. Zn(2+) contacts are provided by His161 and Glu173.

This sequence belongs to the Cyclase 1 superfamily. KynB family. In terms of assembly, homodimer. Zn(2+) is required as a cofactor.

The catalysed reaction is N-formyl-L-kynurenine + H2O = L-kynurenine + formate + H(+). It functions in the pathway amino-acid degradation; L-tryptophan degradation via kynurenine pathway; L-kynurenine from L-tryptophan: step 2/2. Its function is as follows. Catalyzes the hydrolysis of N-formyl-L-kynurenine to L-kynurenine, the second step in the kynurenine pathway of tryptophan degradation. This chain is Kynurenine formamidase, found in Pseudomonas aeruginosa (strain UCBPP-PA14).